We begin with the raw amino-acid sequence, 474 residues long: UDP-N-acetylmuramoylalanine--D-glutamate ligase (474 aa).

134 to 140 (GSNGKST) lines the ATP pocket.

It belongs to the MurCDEF family.

The protein localises to the cytoplasm. The enzyme catalyses UDP-N-acetyl-alpha-D-muramoyl-L-alanine + D-glutamate + ATP = UDP-N-acetyl-alpha-D-muramoyl-L-alanyl-D-glutamate + ADP + phosphate + H(+). Its pathway is cell wall biogenesis; peptidoglycan biosynthesis. Functionally, cell wall formation. Catalyzes the addition of glutamate to the nucleotide precursor UDP-N-acetylmuramoyl-L-alanine (UMA). This is UDP-N-acetylmuramoylalanine--D-glutamate ligase from Thiobacillus denitrificans (strain ATCC 25259 / T1).